Consider the following 210-residue polypeptide: Proteasome subunit beta (210 aa).

The propeptide at 1 to 10 (MKELDQLTKG) is removed in mature form; by autocatalysis. Residue threonine 11 is the Nucleophile of the active site.

This sequence belongs to the peptidase T1B family. In terms of assembly, the 20S proteasome core is composed of 14 alpha and 14 beta subunits that assemble into four stacked heptameric rings, resulting in a barrel-shaped structure. The two inner rings, each composed of seven catalytic beta subunits, are sandwiched by two outer rings, each composed of seven alpha subunits. The catalytic chamber with the active sites is on the inside of the barrel. Has a gated structure, the ends of the cylinder being occluded by the N-termini of the alpha-subunits. Is capped at one or both ends by the proteasome regulatory ATPase, PAN.

Its subcellular location is the cytoplasm. The enzyme catalyses Cleavage of peptide bonds with very broad specificity.. Its activity is regulated as follows. The formation of the proteasomal ATPase PAN-20S proteasome complex, via the docking of the C-termini of PAN into the intersubunit pockets in the alpha-rings, triggers opening of the gate for substrate entry. Interconversion between the open-gate and close-gate conformations leads to a dynamic regulation of the 20S proteasome proteolysis activity. Functionally, component of the proteasome core, a large protease complex with broad specificity involved in protein degradation. This Methanopyrus kandleri (strain AV19 / DSM 6324 / JCM 9639 / NBRC 100938) protein is Proteasome subunit beta.